A 426-amino-acid polypeptide reads, in one-letter code: Glutamate-1-semialdehyde 2,1-aminomutase (426 aa).

K265 is modified (N6-(pyridoxal phosphate)lysine).

The protein belongs to the class-III pyridoxal-phosphate-dependent aminotransferase family. HemL subfamily. Homodimer. Pyridoxal 5'-phosphate is required as a cofactor.

The protein localises to the cytoplasm. It catalyses the reaction (S)-4-amino-5-oxopentanoate = 5-aminolevulinate. The protein operates within porphyrin-containing compound metabolism; protoporphyrin-IX biosynthesis; 5-aminolevulinate from L-glutamyl-tRNA(Glu): step 2/2. This Enterobacter sp. (strain 638) protein is Glutamate-1-semialdehyde 2,1-aminomutase.